A 75-amino-acid chain; its full sequence is UPF0270 protein Pfl01_4103 (75 aa).

This sequence belongs to the UPF0270 family.

This is UPF0270 protein Pfl01_4103 from Pseudomonas fluorescens (strain Pf0-1).